The primary structure comprises 550 residues: Hydroxylamine reductase (550 aa).

4 residues coordinate [2Fe-2S] cluster: C3, C6, C18, and C25. Hybrid [4Fe-2O-2S] cluster-binding residues include H249, E273, C317, C405, C433, C458, E492, and K494. At C405 the chain carries Cysteine persulfide.

Belongs to the HCP family. Requires [2Fe-2S] cluster as cofactor. Hybrid [4Fe-2O-2S] cluster serves as cofactor.

It is found in the cytoplasm. The enzyme catalyses A + NH4(+) + H2O = hydroxylamine + AH2 + H(+). Its function is as follows. Catalyzes the reduction of hydroxylamine to form NH(3) and H(2)O. The polypeptide is Hydroxylamine reductase (Escherichia coli O17:K52:H18 (strain UMN026 / ExPEC)).